Here is a 327-residue protein sequence, read N- to C-terminus: Polyadenylate-binding protein-interacting protein 9 (327 aa).

The short motif at 59-69 (KLNPLAKEFFP) is the PAM2-like element. The segment covering 97-113 (KQSGEEFDLDAKKDDNT) has biased composition (basic and acidic residues). The tract at residues 97-132 (KQSGEEFDLDAKKDDNTRKRRNYSQGRRRLTGRISK) is disordered. A Bipartite nuclear localization signal motif is present at residues 114–125 (RKRRNYSQGRRR). Residues 114-127 (RKRRNYSQGRRRLT) are compositionally biased toward basic residues. RRM domains are found at residues 141 to 216 (RTVY…PSKT) and 238 to 314 (RTIY…PSKT). Residues 308-327 (RVSPSKTPVRPRITRPPSTN) are disordered.

The protein resides in the nucleus. This chain is Polyadenylate-binding protein-interacting protein 9 (CID9), found in Arabidopsis thaliana (Mouse-ear cress).